The following is an 84-amino-acid chain: Putative antitoxin VapB37 (84 aa).

In terms of biological role, probable antitoxin component of a type II toxin-antitoxin (TA) system. Its putative cognate toxin is VapC37. The chain is Putative antitoxin VapB37 (vapB37) from Mycobacterium tuberculosis (strain CDC 1551 / Oshkosh).